A 468-amino-acid polypeptide reads, in one-letter code: ERO1-like protein alpha (468 aa).

A signal peptide spans 1–23 (MGRRWGFLIGFLVAVGLLGLGHG). 8 disulfides stabilise this stretch: cysteine 35–cysteine 48, cysteine 37–cysteine 46, cysteine 85–cysteine 391, cysteine 94–cysteine 99, cysteine 94–cysteine 131, cysteine 99–cysteine 104, cysteine 208–cysteine 241, and cysteine 394–cysteine 397. 3 positions are modified to phosphoserine: serine 106, serine 143, and serine 145. Residues arginine 187, threonine 189, and tryptophan 200 each coordinate FAD. Residues serine 252 and histidine 255 each contribute to the FAD site. A glycan (N-linked (GlcNAc...) asparagine) is linked at asparagine 280. Positions 287 and 300 each coordinate FAD. N-linked (GlcNAc...) asparagine glycosylation is present at asparagine 384.

The protein belongs to the EROs family. In terms of assembly, predominantly monomer. May function both as a monomer and a homodimer. Interacts with PDILT. Interacts with ERP44; the interaction results in retention of ERO1A in the endoplasmic reticulum. The cofactor is FAD. Post-translationally, the Cys-94/Cys-99 and Cys-394/Cys-397 disulfide bonds constitute the redox-active center. The Cys-94/Cys-99 disulfide bond may accept electron from P4HB and funnel them to the active site disulfide Cys-394/Cys-397. The regulatory Cys-99/Cys-104 disulfide bond stabilizes the other regulatory bond Cys-94/Cys-131. Phosphorylated on Ser-145 by FAM20C in the Golgi which increases its enzymatic activity. Phosphorylation is induced by lactation. It is also induced by hypoxia and reductive stress.

It localises to the endoplasmic reticulum membrane. It is found in the golgi apparatus lumen. The protein resides in the secreted. The protein localises to the cell projection. Its subcellular location is the dendrite. Its activity is regulated as follows. Enzyme activity is tightly regulated to prevent the accumulation of reactive oxygen species in the endoplasmic reticulum. Reversibly down-regulated by the formation of disulfide bonds between the active site Cys-94 and Cys-131, and between Cys-99 and Cys-104. Glutathione may be required to regulate its activity in the endoplasmic reticulum. Functionally, oxidoreductase involved in disulfide bond formation in the endoplasmic reticulum. Efficiently reoxidizes P4HB/PDI, the enzyme catalyzing protein disulfide formation, in order to allow P4HB to sustain additional rounds of disulfide formation. Following P4HB reoxidation, passes its electrons to molecular oxygen via FAD, leading to the production of reactive oxygen species (ROS) in the cell. Required for the proper folding of immunoglobulins. Plays an important role in ER stress-induced, CHOP-dependent apoptosis by activating the inositol 1,4,5-trisphosphate receptor IP3R1. The sequence is that of ERO1-like protein alpha from Bos taurus (Bovine).